The following is a 283-amino-acid chain: Pantothenate synthetase (283 aa).

31–38 contacts ATP; the sequence is MGALHDGH. The active-site Proton donor is the His-38. A (R)-pantoate-binding site is contributed by Gln-62. Gln-62 is a beta-alanine binding site. 148–151 provides a ligand contact to ATP; the sequence is GKKD. Gln-154 lines the (R)-pantoate pocket. ATP is bound by residues Val-177 and 185 to 188; that span reads KSSR.

Belongs to the pantothenate synthetase family. Homodimer.

The protein resides in the cytoplasm. The enzyme catalyses (R)-pantoate + beta-alanine + ATP = (R)-pantothenate + AMP + diphosphate + H(+). Its pathway is cofactor biosynthesis; (R)-pantothenate biosynthesis; (R)-pantothenate from (R)-pantoate and beta-alanine: step 1/1. Its function is as follows. Catalyzes the condensation of pantoate with beta-alanine in an ATP-dependent reaction via a pantoyl-adenylate intermediate. The sequence is that of Pantothenate synthetase from Staphylococcus aureus (strain bovine RF122 / ET3-1).